The primary structure comprises 208 residues: TnpB-like protein MJ0012 (208 aa).

Residues Cys-83, Cys-86, Cys-100, and Cys-103 each coordinate Zn(2+).

The protein belongs to the transposase 35 family.

The sequence is that of TnpB-like protein MJ0012 from Methanocaldococcus jannaschii (strain ATCC 43067 / DSM 2661 / JAL-1 / JCM 10045 / NBRC 100440) (Methanococcus jannaschii).